The following is a 116-amino-acid chain: Phycoerythrin alpha-3 subunit (116 aa).

5 residues coordinate (2R,3E)-phycoerythrobilin: serine 53, glutamate 63, arginine 64, cysteine 67, and lysine 85.

Belongs to the phycoerythrin family. In terms of assembly, heterotetramer of 2 different alpha chains and 2 identical beta chains which form 2 alpha-beta heterodimers within the heterotetramer. The two alpha-beta heterodimers are rotated to an open configuration in contrast to the closed configuration found in other cryptophyte species due to the insertion of a single amino acid, Asp-65, in a conserved region of the alpha chain. In the open form, the central chromophores are not in physical contact but are separated by a water-filled channel. Contains three phycoerythrobilin chromophores with binding mediated by both the alpha and beta subunits.

The protein resides in the plastid. It is found in the chloroplast thylakoid membrane. Functionally, light-harvesting photosynthetic tetrapyrrole chromophore-protein from the phycobiliprotein complex. In Hemiselmis andersenii (Cryptophyte alga), this protein is Phycoerythrin alpha-3 subunit.